A 1454-amino-acid chain; its full sequence is MWAQLLLGMLALSPAIAEELPNYLVTLPARLNFPSVQKVCLDLSPGYSDVKFTVTLETKDKTQKLLEYSGLKKRHLHCISFLVPPPAGGTEEVATIRVSGVGNNISFEEKKKVLIQRQGNGTFVQTDKPLYTPGQQVYFRIVTMDSNFVPVNDKYSMVELQDPNSNRIAQWLEVVPEQGIVDLSFQLAPEAMLGTYTVAVAEGKTFGTFSVEEYVLPKFKVEVVEPKELSTVQESFLVKICCRYTYGKPMLGAVQVSVCQKANTYWYREVEREQLPDKCRNLSGQTDKTGCFSAPVDMATFDLIGYAYSHQINIVATVVEEGTGVEANATQNIYISPQMGSMTFEDTSNFYHPNFPFSGKIRVRGHDDSFLKNHLVFLVIYGTNGTFNQTLVTDNNGLAPFTLETSGWNGTDVSLEGKFQMEDLVYNPEQVPRYYQNAYLHLRPFYSTTRSFLGIHRLNGPLKCGQPQEVLVDYYIDPADASPDQEISFSYYLIGKGSLVMEGQKHLNSKKKGLKASFSLSLTFTSRLAPDPSLVIYAIFPSGGVVADKIQFSVEMCFDNQVSLGFSPSQQLPGAEVELQLQAAPGSLCALRAVDESVLLLRPDRELSNRSVYGMFPFWYGHYPYQVAEYDQCPVSGPWDFPQPLIDPMPQGHSSQRSIIWRPSFSEGTDLFSFFRDVGLKILSNAKIKKPVDCSHRSPEYSTAMGAGGGHPEAFESSTPLHQAEDSQVRQYFPETWLWDLFPIGNSGKEAVHVTVPDAITEWKAMSFCTSQSRGFGLSPTVGLTAFKPFFVDLTLPYSVVRGESFRLTATIFNYLKDCIRVQTDLAKSHEYQLESWADSQTSSCLCADDAKTHHWNITAVKLGHINFTISTKILDSNEPCGGQKGFVPQKGRSDTLIKPVLVKPEGVLVEKTHSSLLCPKGKVASESVSLELPVDIVPDSTKAYVTVLGDIMGTALQNLDGLVQMPSGCGEQNMVLFAPIIYVLQYLEKAGLLTEEIRSRAVGFLEIGYQKELMYKHSNGSYSAFGERDGNGNTWLTAFVTKCFGQAQKFIFIDPKNIQDALKWMAGNQLPSGCYANVGNLLHTAMKGGVDDEVSLTAYVTAALLEMGKDVDDPMVSQGLRCLKNSATSTTNLYTQALLAYIFSLAGEMDIRNILLKQLDQQAIISGESIYWSQKPTPSSNASPWSEPAAVDVELTAYALLAQLTKPSLTQKEIAKATSIVAWLAKQHNAYGGFSSTQDTVVALQALAKYATTAYMPSEEINLVVKSTENFQRTFNIQSVNRLVFQQDTLPNVPGMYTLEASGQGCVYVQTVLRYNILPPTNMKTFSLSVEIGKARCEQPTSPRSLTLTIHTSYVGSRSSSNMAIVEVKMLSGFSPMEGTNQLLLQQPLVKKVEFGTDTLNIYLDELIKNTQTYTFTISQSVLVTNLKPATIKVYDYYLPDEQATIQYSDPCE.

The N-terminal stretch at 1–17 (MWAQLLLGMLALSPAIA) is a signal peptide. Cys40 and Cys78 are disulfide-bonded. N-linked (GlcNAc...) asparagine glycosylation is present at Asn120. Cystine bridges form between Cys241/Cys291 and Cys259/Cys279. N-linked (GlcNAc...) asparagine glycosylation is found at Asn281 and Asn409. Intrachain disulfides connect Cys464–Cys557, Cys589–Cys769, Cys819–Cys847, Cys845–Cys881, Cys919–Cys1307, Cys1075–Cys1123, and Cys1338–Cys1453. The segment at 695-726 (SHRSPEYSTAMGAGGGHPEAFESSTPLHQAED) is bait region. Asn857 carries an N-linked (GlcNAc...) asparagine glycan. The segment at residues 970 to 973 (CGEQ) is a cross-link (isoglutamyl cysteine thioester (Cys-Gln)). N-linked (GlcNAc...) asparagine glycosylation occurs at Asn1020.

The protein belongs to the protease inhibitor I39 (alpha-2-macroglobulin) family. As to quaternary structure, monomer. In terms of tissue distribution, in the epidermis, expressed predominantly in the granular layer at the apical edge of keratinocytes (at protein level). Also detected in placenta, testis and thymus but not in epithelia of kidney, lung, small intestine or colon.

The protein resides in the secreted. Its function is as follows. Is able to inhibit all four classes of proteinases by a unique 'trapping' mechanism. This protein has a peptide stretch, called the 'bait region' which contains specific cleavage sites for different proteinases. When a proteinase cleaves the bait region, a conformational change is induced in the protein which traps the proteinase. The entrapped enzyme remains active against low molecular weight substrates (activity against high molecular weight substrates is greatly reduced). Following cleavage in the bait region a thioester bond is hydrolyzed and mediates the covalent binding of the protein to the proteinase. Displays inhibitory activity against chymotrypsin, papain, thermolysin, subtilisin A and, to a lesser extent, elastase but not trypsin. May play an important role during desquamation by inhibiting extracellular proteases. The chain is Alpha-2-macroglobulin-like protein 1 from Homo sapiens (Human).